The chain runs to 312 residues: Malate dehydrogenase (312 aa).

NAD(+) is bound by residues 7-13 (GAAGGIG) and aspartate 34. 2 residues coordinate substrate: arginine 81 and arginine 87. NAD(+)-binding positions include asparagine 94 and 117–119 (ITN). Residues asparagine 119 and arginine 153 each coordinate substrate. Histidine 177 (proton acceptor) is an active-site residue. Methionine 227 is a binding site for NAD(+).

The protein belongs to the LDH/MDH superfamily. MDH type 1 family. As to quaternary structure, homodimer.

It catalyses the reaction (S)-malate + NAD(+) = oxaloacetate + NADH + H(+). Its function is as follows. Catalyzes the reversible oxidation of malate to oxaloacetate. In Salmonella gallinarum (strain 287/91 / NCTC 13346), this protein is Malate dehydrogenase.